The chain runs to 127 residues: Protein translocase subunit SecE (127 aa).

The next 3 helical transmembrane spans lie at 16–36 (IAKW…NHYY), 42–62 (IFQN…IFLT), and 98–118 (IIVT…LIWF).

This sequence belongs to the SecE/SEC61-gamma family. Component of the Sec protein translocase complex. Heterotrimer consisting of SecY, SecE and SecG subunits. The heterotrimers can form oligomers, although 1 heterotrimer is thought to be able to translocate proteins. Interacts with the ribosome. Interacts with SecDF, and other proteins may be involved. Interacts with SecA.

The protein localises to the cell membrane. Functionally, essential subunit of the Sec protein translocation channel SecYEG. Clamps together the 2 halves of SecY. May contact the channel plug during translocation. The sequence is that of Protein translocase subunit SecE from Buchnera aphidicola subsp. Baizongia pistaciae (strain Bp).